The chain runs to 335 residues: tRNA-dihydrouridine(20/20a) synthase (335 aa).

Residues 19-21 and glutamine 72 contribute to the FMN site; that span reads PMM. The Proton donor role is filled by cysteine 102. FMN is bound by residues lysine 141, histidine 173, 213 to 215, and 235 to 236; these read NGG and GR.

Belongs to the Dus family. DusA subfamily. It depends on FMN as a cofactor.

It carries out the reaction 5,6-dihydrouridine(20) in tRNA + NADP(+) = uridine(20) in tRNA + NADPH + H(+). The enzyme catalyses 5,6-dihydrouridine(20) in tRNA + NAD(+) = uridine(20) in tRNA + NADH + H(+). The catalysed reaction is 5,6-dihydrouridine(20a) in tRNA + NADP(+) = uridine(20a) in tRNA + NADPH + H(+). It catalyses the reaction 5,6-dihydrouridine(20a) in tRNA + NAD(+) = uridine(20a) in tRNA + NADH + H(+). Functionally, catalyzes the synthesis of 5,6-dihydrouridine (D), a modified base found in the D-loop of most tRNAs, via the reduction of the C5-C6 double bond in target uridines. Specifically modifies U20 and U20a in tRNAs. This Xanthomonas campestris pv. campestris (strain ATCC 33913 / DSM 3586 / NCPPB 528 / LMG 568 / P 25) protein is tRNA-dihydrouridine(20/20a) synthase.